The following is a 218-amino-acid chain: MLQSTARTASKLVQPVAGVLAVRSKHTLPDLPFDYADLEPVISHEIMQLHHQKHHATYVNNLNQIEEKLHEAVSKGNLKEAIALQPALKFNGGGHINHSIFWTNLAKDGGEPSKELMDTIKRDFGSLDNLQKRLSDITIAVQGSGWGWLGYCKKDKILKIATCANQDPLEGMVPLFGIDVWEHAYYLQYKNVRPDYVHAIWKIANWKNISERFANARQ.

The transit peptide at 1–24 (MLQSTARTASKLVQPVAGVLAVRS) directs the protein to the mitochondrion. Mn(2+)-binding residues include H50, H98, D179, and H183.

Belongs to the iron/manganese superoxide dismutase family. In terms of assembly, homotetramer. The cofactor is Mn(2+). Expressed in pharynx and rectum. Upon thermal stress, expressed in vulva, body wall muscles and hypodermis.

The protein resides in the mitochondrion. The enzyme catalyses 2 superoxide + 2 H(+) = H2O2 + O2. Functionally, destroys superoxide anion radicals which are normally produced within the cells and which are toxic to biological systems. This Caenorhabditis elegans protein is Superoxide dismutase [Mn] 2, mitochondrial (sod-3).